The primary structure comprises 331 residues: Anthranilate phosphoribosyltransferase (331 aa).

5-phospho-alpha-D-ribose 1-diphosphate is bound by residues G78, 81–82 (GD), S86, 88–91 (NIST), 106–114 (KHGNKSITS), and S118. Anthranilate is bound at residue G78. Mg(2+) is bound at residue S90. N109 provides a ligand contact to anthranilate. R163 provides a ligand contact to anthranilate. Positions 222 and 223 each coordinate Mg(2+).

The protein belongs to the anthranilate phosphoribosyltransferase family. In terms of assembly, homodimer. The cofactor is Mg(2+).

It catalyses the reaction N-(5-phospho-beta-D-ribosyl)anthranilate + diphosphate = 5-phospho-alpha-D-ribose 1-diphosphate + anthranilate. It functions in the pathway amino-acid biosynthesis; L-tryptophan biosynthesis; L-tryptophan from chorismate: step 2/5. Its function is as follows. Catalyzes the transfer of the phosphoribosyl group of 5-phosphorylribose-1-pyrophosphate (PRPP) to anthranilate to yield N-(5'-phosphoribosyl)-anthranilate (PRA). The sequence is that of Anthranilate phosphoribosyltransferase from Staphylococcus epidermidis (strain ATCC 35984 / DSM 28319 / BCRC 17069 / CCUG 31568 / BM 3577 / RP62A).